The following is a 285-amino-acid chain: Phosphatidylserine decarboxylase proenzyme (285 aa).

Active-site charge relay system; for autoendoproteolytic cleavage activity residues include aspartate 89, histidine 146, and serine 252. The active-site Schiff-base intermediate with substrate; via pyruvic acid; for decarboxylase activity is the serine 252. Serine 252 carries the pyruvic acid (Ser); by autocatalysis modification.

It belongs to the phosphatidylserine decarboxylase family. PSD-B subfamily. Prokaryotic type I sub-subfamily. As to quaternary structure, heterodimer of a large membrane-associated beta subunit and a small pyruvoyl-containing alpha subunit. Requires pyruvate as cofactor. Post-translationally, is synthesized initially as an inactive proenzyme. Formation of the active enzyme involves a self-maturation process in which the active site pyruvoyl group is generated from an internal serine residue via an autocatalytic post-translational modification. Two non-identical subunits are generated from the proenzyme in this reaction, and the pyruvate is formed at the N-terminus of the alpha chain, which is derived from the carboxyl end of the proenzyme. The autoendoproteolytic cleavage occurs by a canonical serine protease mechanism, in which the side chain hydroxyl group of the serine supplies its oxygen atom to form the C-terminus of the beta chain, while the remainder of the serine residue undergoes an oxidative deamination to produce ammonia and the pyruvoyl prosthetic group on the alpha chain. During this reaction, the Ser that is part of the protease active site of the proenzyme becomes the pyruvoyl prosthetic group, which constitutes an essential element of the active site of the mature decarboxylase.

The protein localises to the cell membrane. It carries out the reaction a 1,2-diacyl-sn-glycero-3-phospho-L-serine + H(+) = a 1,2-diacyl-sn-glycero-3-phosphoethanolamine + CO2. The protein operates within phospholipid metabolism; phosphatidylethanolamine biosynthesis; phosphatidylethanolamine from CDP-diacylglycerol: step 2/2. Catalyzes the formation of phosphatidylethanolamine (PtdEtn) from phosphatidylserine (PtdSer). In Vibrio campbellii (strain ATCC BAA-1116), this protein is Phosphatidylserine decarboxylase proenzyme.